Consider the following 229-residue polypeptide: Cytidylate kinase (229 aa).

12–20 (GPSGVGKST) contacts ATP.

Belongs to the cytidylate kinase family. Type 1 subfamily.

It localises to the cytoplasm. The enzyme catalyses CMP + ATP = CDP + ADP. It carries out the reaction dCMP + ATP = dCDP + ADP. In Mesomycoplasma hyopneumoniae (strain 232) (Mycoplasma hyopneumoniae), this protein is Cytidylate kinase.